The following is a 165-amino-acid chain: Small ribosomal subunit protein uS5 (165 aa).

The 64-residue stretch at 10–73 (LKEKVVFINR…EDAKKNLVEV (64 aa)) folds into the S5 DRBM domain.

This sequence belongs to the universal ribosomal protein uS5 family. Part of the 30S ribosomal subunit. Contacts proteins S4 and S8.

Its function is as follows. With S4 and S12 plays an important role in translational accuracy. Functionally, located at the back of the 30S subunit body where it stabilizes the conformation of the head with respect to the body. This is Small ribosomal subunit protein uS5 from Clostridium acetobutylicum (strain ATCC 824 / DSM 792 / JCM 1419 / IAM 19013 / LMG 5710 / NBRC 13948 / NRRL B-527 / VKM B-1787 / 2291 / W).